A 533-amino-acid chain; its full sequence is MNASPTPTATTTTEPATAVVRCRTRLARRVVAAVGPDGLLPAPCESRVLESALALALLTEERAEADATARLTAYLRTTLRTAPPDPFQCAVARAVLGGAGERGERVGDEGDMDAGTALDAGLDGFDHFTAGRKRLMFRTVLAALGATGFPAVPWEAYDTRPQQSWLHMEMKALKVLAAHGTGHPDVVRDEDWRALLPALEPGPAWECNNLAQLLALLALRHSPRHRPALGDVLKHVAGRLRPDGGMPFIDGMTVFTTAAAGLALSLLPAPPACVTPMADALALRRNPDGGYGFHSGVAQSDVDDTCYVLEFLRRAAPDRHRTAVAEAEGYLLALRNPDGGFPTFARGTSSEIAMTAAAASALAHDPDRREEVDEAVRYVVRHQRPDGTFERSWSRNATNAVFRAVLALTGVAAHGEERRSRARAAERALAHLAATQNGDGGWGHAEAEPSDPISTAYAVIALARGPRARPGGPLDRALAYLVERQHPDGGYRSRPDQAGPRPLLYDVPALADVFVLLALAHATATPDPEGCSR.

(2E,6E)-farnesyl diphosphate contacts are provided by arginine 132, lysine 133, glutamine 163, and tryptophan 165. Position 169 (glutamate 169) interacts with Mg(2+). PFTB repeat units lie at residues 274–316 (VTPM…RRAA), 324–366 (VAEA…AHDP), 372–415 (VDEA…AAHG), 425–466 (AERA…ARGP), and 474–517 (LDRA…FVLL). Aspartate 303 serves as the catalytic Proton donor. A (2E,6E)-farnesyl diphosphate-binding site is contributed by arginine 501.

It belongs to the terpene cyclase/mutase family. It depends on Mg(2+) as a cofactor. The cofactor is Ni(2+). Requires Co(2+) as cofactor.

The catalysed reaction is (2E,6E)-farnesyl diphosphate = (5S,9S,10S)-drim-7-en-11-yl diphosphate. Catalyzes the cyclization of farnesyl diphosphate (FPP) to drimenyl diphosphate. Cannot use geranylgeranyl diphosphate (GGPP) as substrate. The protein is Drimenyl diphosphate synthase of Streptomyces showdoensis.